Here is a 369-residue protein sequence, read N- to C-terminus: Peptide chain release factor 2 (369 aa).

Glutamine 251 carries the post-translational modification N5-methylglutamine.

Belongs to the prokaryotic/mitochondrial release factor family. In terms of processing, methylated by PrmC. Methylation increases the termination efficiency of RF2.

Its subcellular location is the cytoplasm. Peptide chain release factor 2 directs the termination of translation in response to the peptide chain termination codons UGA and UAA. This is Peptide chain release factor 2 from Chlamydia trachomatis serovar A (strain ATCC VR-571B / DSM 19440 / HAR-13).